Here is a 222-residue protein sequence, read N- to C-terminus: Charged multivesicular body protein 3 (222 aa).

Residue Gly2 is the site of N-myristoyl glycine attachment. Positions 2-113 (GLFGKTQEKP…LQKSTEVMKA (112 aa)) are intramolecular interaction with C-terminus. The stretch at 22-54 (KIRKEMRVVDRQIRDIQREEEKVKRSVKDAAKK) forms a coiled coil. 2 important for autoinhibitory function regions span residues 59–64 (VCVVLA) and 168–169 (IL). A coiled-coil region spans residues 149–222 (ESMDDQEEME…MQSRLATLRS (74 aa)). Residues 151-220 (MDDQEEMEEA…EAMQSRLATL (70 aa)) are intramolecular interaction with N-terminus. The tract at residues 151 to 222 (MDDQEEMEEA…MQSRLATLRS (72 aa)) is interaction with VPS4A. Lys179 participates in a covalent cross-link: Glycyl lysine isopeptide (Lys-Gly) (interchain with G-Cter in ubiquitin). The interval 180–222 (APSKVTDALPEPEPSGAMAASDEEEEEEEALEAMQSRLATLRS) is disordered. Interaction with STAMBP stretches follow at residues 196-222 (AMAASDEEEEEEEALEAMQSRLATLRS), 203-207 (EEEEE), and 221-222 (RS). The residue at position 200 (Ser200) is a Phosphoserine. A compositionally biased stretch (acidic residues) spans 200–210 (SDEEEEEEEAL). Residues 201–211 (DEEEEEEEALE) carry the MIT-interacting motif motif.

It belongs to the SNF7 family. Probable core component of the endosomal sorting required for transport complex III (ESCRT-III). ESCRT-III components are thought to multimerize to form a flat lattice on the perimeter membrane of the endosome. Several assembly forms of ESCRT-III may exist that interact and act sequentially. Forms a metastable monomer in solution; its core structure (without part of the putative autoinhibitory C-terminal acidic region) oligomerizes into a flat lattice via two different dimerization interfaces. In vitro, heteromerizes with CHMP2A (but not CHMP4) to form helical tubular structures that expose membrane-interacting sites on the outside whereas VPS4B can associate on the inside of the tubule. May interact with IGFBP7; the relevance of such interaction however remains unclear. Interacts with CHMP2A. Interacts with CHMP4A; the interaction requires the release of CHMP4A autoinhibition. Interacts with VPS4A. Interacts with STAMBP; the interaction appears to relieve the autoinhibition of CHMP3. Interacts with VTA1.

It localises to the cytoplasm. Its subcellular location is the cytosol. It is found in the membrane. The protein resides in the endosome. The protein localises to the late endosome membrane. Its function is as follows. Probable core component of the endosomal sorting required for transport complex III (ESCRT-III) which is involved in multivesicular bodies (MVBs) formation and sorting of endosomal cargo proteins into MVBs. MVBs contain intraluminal vesicles (ILVs) that are generated by invagination and scission from the limiting membrane of the endosome and mostly are delivered to lysosomes enabling degradation of membrane proteins, such as stimulated growth factor receptors, lysosomal enzymes and lipids. The MVB pathway appears to require the sequential function of ESCRT-O, -I,-II and -III complexes. ESCRT-III proteins mostly dissociate from the invaginating membrane before the ILV is released. The ESCRT machinery also functions in topologically equivalent membrane fission events, such as the terminal stages of cytokinesis and the budding of enveloped viruses (lentiviruses). ESCRT-III proteins are believed to mediate the necessary vesicle extrusion and/or membrane fission activities, possibly in conjunction with the AAA ATPase VPS4. Selectively binds to phosphatidylinositol 3,5-bisphosphate PtdIns(3,5)P2 and PtdIns(3,4)P2 in preference to other phosphoinositides tested. Involved in late stages of cytokinesis. Plays a role in endosomal sorting/trafficking of EGF receptor. The protein is Charged multivesicular body protein 3 (CHMP3) of Macaca fascicularis (Crab-eating macaque).